The primary structure comprises 199 residues: Ribonuclease HII (199 aa).

One can recognise an RNase H type-2 domain in the interval 7–196; that stretch reads PWVCGVDEAG…VRELMANEKD (190 aa). 3 residues coordinate a divalent metal cation: D13, E14, and D105.

It belongs to the RNase HII family. Mn(2+) serves as cofactor. It depends on Mg(2+) as a cofactor.

The protein localises to the cytoplasm. The catalysed reaction is Endonucleolytic cleavage to 5'-phosphomonoester.. Endonuclease that specifically degrades the RNA of RNA-DNA hybrids. The chain is Ribonuclease HII from Nitrosospira multiformis (strain ATCC 25196 / NCIMB 11849 / C 71).